Consider the following 221-residue polypeptide: Iron-sulfur cluster repair protein YtfE (221 aa).

It belongs to the RIC family. YtfE subfamily. As to quaternary structure, homodimer.

It localises to the cytoplasm. Functionally, di-iron-containing protein involved in the repair of iron-sulfur clusters damaged by oxidative and nitrosative stress conditions. The chain is Iron-sulfur cluster repair protein YtfE from Yersinia pseudotuberculosis serotype O:1b (strain IP 31758).